Consider the following 1940-residue polypeptide: Myosin-2 (1940 aa).

One can recognise a Myosin N-terminal SH3-like domain in the interval 33 to 82 (DAKTSVFVAEPKESFVKGTVQSREGGKVTVKTEAGATLTVKEDQVFPMNP). Phosphothreonine is present on residues threonine 64 and threonine 69. In terms of domain architecture, Myosin motor spans 86 to 783 (DKIEDMAMMT…LLGLLEEMRD (698 aa)). The residue at position 130 (lysine 130) is an N6,N6,N6-trimethyllysine. Residue 179–186 (GESGAGKT) participates in ATP binding. Phosphotyrosine is present on tyrosine 389. Serine 392 is modified (phosphoserine). Threonine 419 carries the post-translational modification Phosphothreonine. Serine 625 bears the Phosphoserine mark. The interval 660–682 (LNKLMTNLRSTHPHFVRCIIPNE) is actin-binding. Position 758 is a pros-methylhistidine (histidine 758). Residues 762–776 (KFGHTKVFFKAGLLG) are actin-binding. Residues 786 to 815 (LAQLITRTQARCRGFLARVEYQKMVERRES) form the IQ domain. The stretch at 844–1940 (LLKSAETEKE…EVHTKVISEE (1097 aa)) forms a coiled coil. Residues serine 1093, serine 1097, serine 1163, and serine 1238 each carry the phosphoserine modification. A disordered region spans residues 1154 to 1173 (RLEEAGGATSAQIEMNKKRE). Residue threonine 1242 is modified to Phosphothreonine. Serine 1244 is modified (phosphoserine). Threonine 1256 carries the post-translational modification Phosphothreonine. A Phosphoserine modification is found at serine 1262. Threonine 1287 is subject to Phosphothreonine. 4 positions are modified to phosphoserine: serine 1289, serine 1293, serine 1304, and serine 1307. Tyrosine 1465 is subject to Phosphotyrosine. At threonine 1468 the chain carries Phosphothreonine. Position 1475 is a phosphoserine (serine 1475). Position 1493 is a phosphotyrosine (tyrosine 1493). Residue serine 1496 is modified to Phosphoserine. Residue threonine 1502 is modified to Phosphothreonine. The residue at position 1515 (serine 1515) is a Phosphoserine. Threonine 1518 carries the phosphothreonine modification. 6 positions are modified to phosphoserine: serine 1543, serine 1555, serine 1575, serine 1601, serine 1715, and serine 1727. A phosphothreonine mark is found at threonine 1731 and threonine 1737. Serine 1740 bears the Phosphoserine mark. A disordered region spans residues 1884–1920 (KRQAEEAEEQSNTNLSKFRKLQHELEEAEERADIAES).

The protein belongs to the TRAFAC class myosin-kinesin ATPase superfamily. Myosin family. Muscle myosin is a hexameric protein that consists of 2 heavy chain subunits (MHC), 2 alkali light chain subunits (MLC) and 2 regulatory light chain subunits (MLC-2). Interacts with GCSAM.

It localises to the cytoplasm. The protein resides in the myofibril. Functionally, myosins are actin-based motor molecules with ATPase activity essential for muscle contraction. The protein is Myosin-2 (MYH2) of Canis lupus familiaris (Dog).